A 60-amino-acid chain; its full sequence is MMKEVSFKAEEDLLVLLDRYAMKYKLNRSEAIRKAIEKMLRDELAKEPTPVARVENSSLS.

This is an uncharacterized protein from Acidianus convivator (ATV).